The chain runs to 324 residues: Probable pectinesterase A (324 aa).

The first 19 residues, 1-19, serve as a signal peptide directing secretion; the sequence is MYLPSLVLGLLGFGLTAST. N-linked (GlcNAc...) asparagine glycosylation occurs at N27. Q142 is a substrate binding site. Catalysis depends on D165, which acts as the Proton donor. The active-site Nucleophile is D186. R246 and W248 together coordinate substrate.

It belongs to the pectinesterase family.

Its subcellular location is the secreted. The catalysed reaction is [(1-&gt;4)-alpha-D-galacturonosyl methyl ester](n) + n H2O = [(1-&gt;4)-alpha-D-galacturonosyl](n) + n methanol + n H(+). The protein operates within glycan metabolism; pectin degradation; 2-dehydro-3-deoxy-D-gluconate from pectin: step 1/5. Functionally, involved in maceration and soft-rotting of plant tissue. The protein is Probable pectinesterase A (pmeA) of Aspergillus fumigatus (strain CBS 144.89 / FGSC A1163 / CEA10) (Neosartorya fumigata).